A 444-amino-acid polypeptide reads, in one-letter code: MKHFSVKRLLGLSSVLLVTLGASMHAQSYLPKHESVTLKNGLQVVSVPLENKTGVIEVDVLYKVGSRNETMGKSGIAHMLEHLNFKSTKNLKAGEFDKIVKRFGGVSNASTSFDITRYFIKTSQANLDKSLELFAETMGSLNLKEDEFLPERQVVAEERRWRTDNSPIGMLYFRFFNTAYVYHPYHWTPIGFMDDIQNWTLKDIKKFHSLYYQPKNAIVLVVGDVNSQKVFELSKKHFESLKNLDEKAIPTPYMKEPKQDGARTAVVHKDGVHLEWVALGYKVPAFKHKDQVALDALSRLLGEGKSSWLQSELVDKKRLASQAFSHNMQLQDESVFLFIAGGNPNVKAEALQKEIVALLEKLKKGEITQAELDKLKINQKADFISNLESSSDVAGLFADYLVQNDIQGLTDYQRQFLDLKVSDLVRVANEYFKDTQSTTVFLKP.

A signal peptide spans 1 to 28; sequence MKHFSVKRLLGLSSVLLVTLGASMHAQS. Position 78 (histidine 78) interacts with Zn(2+). Glutamate 81 serves as the catalytic Proton acceptor. Zn(2+) contacts are provided by histidine 82 and glutamate 158.

Belongs to the peptidase M16 family. Zn(2+) is required as a cofactor.

It localises to the secreted. Its activity is regulated as follows. Can function alone, but full activity requires the presence of the non-peptidase homolog YmxG. In terms of biological role, virulence factor that cleaves the cytoplasmic domain of the human junctional adhesion molecule A (JAM-A), compromising gastric epithelial barrier function and cell-cell adhesion. Cleavage of JAM-A occurs after Ala-285 or, to a lesser extent, before Ala-285. This is Zinc protease PqqE from Helicobacter pylori (strain ATCC 700392 / 26695) (Campylobacter pylori).